Reading from the N-terminus, the 125-residue chain is MEQKRTLRVFLAVSLLCALANAYPQYQAVIPNGSSVPNPCNTSQIAQGVGHINFQGTGPLNPFGEDFKAAGKQWTTDLCDMDSDGDGRSNGVELGDPECVWSQGETPARTTDLSHPGFDEATVSC.

An N-terminal signal peptide occupies residues 1-22 (MEQKRTLRVFLAVSLLCALANA). Intrachain disulfides connect Cys40–Cys125 and Cys79–Cys99. The tract at residues 78–125 (LCDMDSDGDGRSNGVELGDPECVWSQGETPARTTDLSHPGFDEATVSC) is disordered. The span at 103–113 (QGETPARTTDL) shows a compositional bias: polar residues.

In terms of assembly, binds to attractin and enticin. As to expression, produced by the albumen gland of the egg cordons.

It localises to the secreted. Its function is as follows. A component of the complex of water-borne protein pheromones that stimulates attraction and mating behavior. Modulates pheromone signaling by direct binding to attractin. This Aplysia californica (California sea hare) protein is Temptin.